A 488-amino-acid polypeptide reads, in one-letter code: Ribulose bisphosphate carboxylase large chain (488 aa).

Positions 128 and 178 each coordinate substrate. Lysine 180 functions as the Proton acceptor in the catalytic mechanism. A substrate-binding site is contributed by lysine 182. Mg(2+) is bound by residues lysine 206, aspartate 208, and glutamate 209. Lysine 206 bears the N6-carboxylysine mark. Histidine 298 functions as the Proton acceptor in the catalytic mechanism. Substrate-binding residues include arginine 299, histidine 331, and serine 383.

Belongs to the RuBisCO large chain family. Type I subfamily. In terms of assembly, heterohexadecamer of 8 large chains and 8 small chains. Mg(2+) serves as cofactor.

It catalyses the reaction 2 (2R)-3-phosphoglycerate + 2 H(+) = D-ribulose 1,5-bisphosphate + CO2 + H2O. The catalysed reaction is D-ribulose 1,5-bisphosphate + O2 = 2-phosphoglycolate + (2R)-3-phosphoglycerate + 2 H(+). RuBisCO catalyzes two reactions: the carboxylation of D-ribulose 1,5-bisphosphate, the primary event in carbon dioxide fixation, as well as the oxidative fragmentation of the pentose substrate. Both reactions occur simultaneously and in competition at the same active site. The polypeptide is Ribulose bisphosphate carboxylase large chain (Variovorax paradoxus (strain S110)).